Here is a 1273-residue protein sequence, read N- to C-terminus: Probable methionine synthase (1273 aa).

The Hcy-binding domain maps to 7-327; sequence FKELADIAKE…DHINAMYKAV (321 aa). Cys-249, Cys-312, and Cys-313 together coordinate Zn(2+). The Pterin-binding domain occupies 360-621; it reads FVNIGERCNV…IDKPLLQLLE (262 aa). Positions 652–749 constitute a B12-binding N-terminal domain; the sequence is KTDEWRNTSV…FMDAERQANI (98 aa). Methylcob(III)alamin is bound by residues Glu-699, 772 to 776, His-775, Ser-820, Thr-824, and Ala-876; that span reads GDVHD. The B12-binding domain maps to 762–897; the sequence is QGTVVIATVK…DMTVRDAFLQ (136 aa). The 347-residue stretch at 927–1273 folds into the AdoMet activation domain; sequence SLKDRRFVAL…LSPIIGYELD (347 aa). Residues Asp-977, Arg-1171, and 1225–1226 contribute to the S-adenosyl-L-methionine site; that span reads YF.

Belongs to the vitamin-B12 dependent methionine synthase family. Methylcob(III)alamin is required as a cofactor. Requires Zn(2+) as cofactor.

It catalyses the reaction (6S)-5-methyl-5,6,7,8-tetrahydrofolate + L-homocysteine = (6S)-5,6,7,8-tetrahydrofolate + L-methionine. It functions in the pathway amino-acid biosynthesis; L-methionine biosynthesis via de novo pathway; L-methionine from L-homocysteine (MetH route): step 1/1. In terms of biological role, catalyzes the transfer of a methyl group from methyl-cobalamin to homocysteine, yielding enzyme-bound cob(I)alamin and methionine. Subsequently, remethylates the cofactor using methyltetrahydrofolate. This is Probable methionine synthase (metr-1) from Caenorhabditis briggsae.